The chain runs to 139 residues: MAPKSVASKAPASQASKAPAAASKAPAKAAKTSAAPKDGAKKRSKKRVESYSSYIYKVLKQVHPDTGISNKAMAILNSFVSDIFERIATEASKLASYNHRSTISSREIQTSVRLILPGELSKHAISEGTKAVTKYSSSK.

The span at 1 to 37 (MAPKSVASKAPASQASKAPAAASKAPAKAAKTSAAPK) shows a compositional bias: low complexity. The disordered stretch occupies residues 1–48 (MAPKSVASKAPASQASKAPAAASKAPAKAAKTSAAPKDGAKKRSKKRV). Residue Lys-9 is modified to N6-acetyllysine; alternate. Residue Lys-9 forms a Glycyl lysine isopeptide (Lys-Gly) (interchain with G-Cter in SUMO); alternate linkage. Phosphoserine is present on Ser-13. The residue at position 17 (Lys-17) is an N6-acetyllysine. A Glycyl lysine isopeptide (Lys-Gly) (interchain with G-Cter in ubiquitin) cross-link involves residue Lys-134.

Belongs to the histone H2B family. In terms of assembly, the nucleosome is a histone octamer containing two molecules each of H2A, H2B, H3 and H4 assembled in one H3-H4 heterotetramer and two H2A-H2B heterodimers. The octamer wraps approximately 147 bp of DNA. Monoubiquitinated by the UBC2-BRE1 complex to form H2BK123ub1. H2BK123ub1 gives a specific tag for epigenetic transcriptional activation and is also prerequisite for H3K4me and H3K79me formation. H2BK123ub1 also modulates the formation of double-strand breaks during meiosis and is a prerequisite for DNA-damage checkpoint activation. Post-translationally, phosphorylated to form H2BS10ph during progression through meiotic prophase. May be correlated with chromosome condensation. In terms of processing, acetylation of N-terminal lysines and particularly formation of H2BK11ac has a positive effect on transcription. Sumoylation to form H2BK6su occurs preferentially near the telomeres and represses gene transcription.

Its subcellular location is the nucleus. The protein resides in the chromosome. Its function is as follows. Core component of nucleosome. Nucleosomes wrap and compact DNA into chromatin, limiting DNA accessibility to the cellular machineries which require DNA as a template. Histones thereby play a central role in transcription regulation, DNA repair, DNA replication and chromosomal stability. DNA accessibility is regulated via a complex set of post-translational modifications of histones, also called histone code, and nucleosome remodeling. This chain is Histone H2B (HTB1), found in Cryptococcus neoformans var. neoformans serotype D (strain B-3501A) (Filobasidiella neoformans).